A 719-amino-acid polypeptide reads, in one-letter code: MLLFVEVTSKGTGLNPNAKVWQEIPSGNPDGTPVTEPSWHETAATSGSHPEGHTELSEDMCKEYEVMYSPSCETTRNTADVEESADGMILGPEDLSYQLYDVSGESSSAISTEDLKECLKKQLEFCFSRENLSKDLYLISQMDSDQFVPIWTVANMEEIKKLTTNTDLILEVLRSSPMVQVDEKGEKVRPSHKRCIVILREIPETTPVEEVKALFKNENCPKVISCEFAHNSNWYITFQSDTDAQQAFKYLREEVKTFQGKPIMARIKAINTFFAKNGYRLMDSSMYTQPIQTPTQYPSPVFMQPVYNPQQYSVYSLVPQSWSPSPAPYFETPLAPFPNGSFVDGFSSPGSYKTNAAAMNMGRPFPKNRVKPHFRSSSGSEHSTEGSVSLGDGPLSRSSSRIFLSERHNPTVTGQQEQTYLPKEAPILQMEQNGDFGRGRRTLFRGRRRRDDDRIPRPQPAATEAKAPTPKFDLLATNFPPLPGSSSRVPDELGLENRMSDVVKGVCREKDSEDVRVSCPVPAEDGQTDCTSAPLSISPSPPCTAEPPVLSTTQQEQDQMEDSAVPKDTLNPVAVPVSSPTATKPSPANTASPCTSNINPPRAVALQEPRKLSYAEVCQKPPKEPSPVLVQPLRELRSNAVSPTRNEENGAPEKPVEKPHEKPETRASKDHSGFRGNTIPRGAAGKIREQRRQFSHRATPQGVTRRNGKEQYVPPRSPK.

An N-acetylmethionine modification is found at Met-1. Positions 12–21 (TGLNPNAKVW) are interaction with PABPC1. A disordered region spans residues 21–55 (WQEIPSGNPDGTPVTEPSWHETAATSGSHPEGHTE). The segment at 107 to 299 (SSAISTEDLK…PIQTPTQYPS (193 aa)) is interaction with the poly-A tract of mRNA. Positions 109 to 198 (AISTEDLKEC…RPSHKRCIVI (90 aa)) constitute an HTH La-type RNA-binding domain. An RRM domain is found at 199-277 (LREIPETTPV…KAINTFFAKN (79 aa)). The residue at position 363 (Arg-363) is an Omega-N-methylarginine. Disordered regions lie at residues 363–398 (RPFP…LSRS) and 437–470 (GRGR…APTP). Low complexity predominate over residues 376–389 (SSSGSEHSTEGSVS). Residues Ser-387 and Ser-396 each carry the phosphoserine modification. Basic residues predominate over residues 439-448 (GRRTLFRGRR). Residues 460–470 (PAATEAKAPTP) are compositionally biased toward low complexity. Ser-500 is subject to Phosphoserine. Polar residues-rich tracts occupy residues 529–538 (DCTSAPLSIS) and 578–599 (SSPT…SNIN). 3 disordered regions span residues 529 to 562 (DCTS…QMED), 576 to 601 (PVSS…INPP), and 615 to 719 (AEVC…RSPK). A phosphoserine mark is found at Ser-578, Ser-592, and Ser-642. Phosphothreonine is present on Thr-644. The span at 654–673 (KPVEKPHEKPETRASKDHSG) shows a compositional bias: basic and acidic residues. Omega-N-methylarginine is present on Arg-681. Ser-717 bears the Phosphoserine mark.

As to quaternary structure, interacts (via N-terminal region) with PABPC1. Interacts with RACK1.

The protein resides in the cytoplasm. The protein localises to the stress granule. It localises to the cytosol. Its function is as follows. RNA binding protein that binds to the poly-A tract of mRNA molecules. Associates with the 40S ribosomal subunit and with polysomes. Plays a role in the regulation of mRNA translation. Plays a role in the regulation of cell morphology and cytoskeletal organization. This is La-related protein 4 (Larp4) from Mus musculus (Mouse).